Reading from the N-terminus, the 499-residue chain is Guanosine-5'-triphosphate,3'-diphosphate pyrophosphatase (499 aa).

The protein belongs to the GppA/Ppx family. GppA subfamily.

It carries out the reaction guanosine 3'-diphosphate 5'-triphosphate + H2O = guanosine 3',5'-bis(diphosphate) + phosphate + H(+). Its pathway is purine metabolism; ppGpp biosynthesis; ppGpp from GTP: step 2/2. Catalyzes the conversion of pppGpp to ppGpp. Guanosine pentaphosphate (pppGpp) is a cytoplasmic signaling molecule which together with ppGpp controls the 'stringent response', an adaptive process that allows bacteria to respond to amino acid starvation, resulting in the coordinated regulation of numerous cellular activities. The polypeptide is Guanosine-5'-triphosphate,3'-diphosphate pyrophosphatase (Klebsiella pneumoniae subsp. pneumoniae (strain ATCC 700721 / MGH 78578)).